The following is an 868-amino-acid chain: Leucine--tRNA ligase (868 aa).

The short motif at 42–52 (PYPSGKLHMGH) is the 'HIGH' region element. Residues 627-631 (KMSKS) carry the 'KMSKS' region motif. Lys-630 lines the ATP pocket.

The protein belongs to the class-I aminoacyl-tRNA synthetase family.

It localises to the cytoplasm. The enzyme catalyses tRNA(Leu) + L-leucine + ATP = L-leucyl-tRNA(Leu) + AMP + diphosphate. The sequence is that of Leucine--tRNA ligase from Pseudomonas savastanoi pv. phaseolicola (strain 1448A / Race 6) (Pseudomonas syringae pv. phaseolicola (strain 1448A / Race 6)).